The chain runs to 315 residues: Homocysteine S-methyltransferase YbgG (315 aa).

The Hcy-binding domain occupies 2–309; it reads NPIQHILDTY…ENIQEIAAWA (308 aa). Residues Cys-229, Cys-294, and Cys-295 each contribute to the Zn(2+) site.

It depends on Zn(2+) as a cofactor.

It catalyses the reaction S-methyl-L-methionine + L-homocysteine = 2 L-methionine + H(+). In Bacillus subtilis (strain 168), this protein is Homocysteine S-methyltransferase YbgG (ybgG).